A 230-amino-acid polypeptide reads, in one-letter code: Large ribosomal subunit protein bL25 (230 aa).

Belongs to the bacterial ribosomal protein bL25 family. CTC subfamily. As to quaternary structure, part of the 50S ribosomal subunit; part of the 5S rRNA/L5/L18/L25 subcomplex. Contacts the 5S rRNA. Binds to the 5S rRNA independently of L5 and L18.

Its function is as follows. This is one of the proteins that binds to the 5S RNA in the ribosome where it forms part of the central protuberance. In Rhodopseudomonas palustris (strain ATCC BAA-98 / CGA009), this protein is Large ribosomal subunit protein bL25 (rplY).